A 154-amino-acid polypeptide reads, in one-letter code: Endoribonuclease YbeY (154 aa).

Zn(2+) is bound by residues H113, H117, and H123.

Belongs to the endoribonuclease YbeY family. Requires Zn(2+) as cofactor.

It localises to the cytoplasm. Single strand-specific metallo-endoribonuclease involved in late-stage 70S ribosome quality control and in maturation of the 3' terminus of the 16S rRNA. The polypeptide is Endoribonuclease YbeY (Vibrio vulnificus (strain CMCP6)).